Reading from the N-terminus, the 210-residue chain is Na(+)-translocating NADH-quinone reductase subunit D (210 aa).

The next 5 helical transmembrane spans lie at 42–62, 72–92, 103–123, 131–151, and 178–198; these read FVMT…VSLI, IIVQ…ILKA, VFVG…AFAM, LIDG…VGFF, and NGLM…IWAI.

Belongs to the NqrDE/RnfAE family. In terms of assembly, composed of six subunits; NqrA, NqrB, NqrC, NqrD, NqrE and NqrF.

It localises to the cell inner membrane. The catalysed reaction is a ubiquinone + n Na(+)(in) + NADH + H(+) = a ubiquinol + n Na(+)(out) + NAD(+). In terms of biological role, NQR complex catalyzes the reduction of ubiquinone-1 to ubiquinol by two successive reactions, coupled with the transport of Na(+) ions from the cytoplasm to the periplasm. NqrA to NqrE are probably involved in the second step, the conversion of ubisemiquinone to ubiquinol. The sequence is that of Na(+)-translocating NADH-quinone reductase subunit D from Vibrio vulnificus (strain CMCP6).